The following is an 89-amino-acid chain: Small ribosomal subunit protein bS20 (89 aa).

The interval 1–28 (MTLANIKSAKKRAIQSEKRRQHNASQRS) is disordered.

Belongs to the bacterial ribosomal protein bS20 family.

Its function is as follows. Binds directly to 16S ribosomal RNA. In Pasteurella multocida (strain Pm70), this protein is Small ribosomal subunit protein bS20.